A 371-amino-acid chain; its full sequence is Putative glutamate--cysteine ligase 2 (371 aa).

It belongs to the glutamate--cysteine ligase type 2 family. YbdK subfamily. In terms of assembly, homodimer.

The catalysed reaction is L-cysteine + L-glutamate + ATP = gamma-L-glutamyl-L-cysteine + ADP + phosphate + H(+). In terms of biological role, ATP-dependent carboxylate-amine ligase which exhibits weak glutamate--cysteine ligase activity. The chain is Putative glutamate--cysteine ligase 2 from Klebsiella pneumoniae (strain 342).